The chain runs to 341 residues: Probable dual-specificity RNA methyltransferase RlmN (341 aa).

E88 serves as the catalytic Proton acceptor. A Radical SAM core domain is found at 94-314 (EGDRATLCIS…ESHGFTCTIR (221 aa)). Residues C101 and C325 are joined by a disulfide bond. [4Fe-4S] cluster-binding residues include C108, C112, and C115. S-adenosyl-L-methionine-binding positions include 153-154 (GE), S185, 206-208 (SLH), and H282. Catalysis depends on C325, which acts as the S-methylcysteine intermediate.

This sequence belongs to the radical SAM superfamily. RlmN family. The cofactor is [4Fe-4S] cluster.

It localises to the cytoplasm. The catalysed reaction is adenosine(2503) in 23S rRNA + 2 reduced [2Fe-2S]-[ferredoxin] + 2 S-adenosyl-L-methionine = 2-methyladenosine(2503) in 23S rRNA + 5'-deoxyadenosine + L-methionine + 2 oxidized [2Fe-2S]-[ferredoxin] + S-adenosyl-L-homocysteine. It catalyses the reaction adenosine(37) in tRNA + 2 reduced [2Fe-2S]-[ferredoxin] + 2 S-adenosyl-L-methionine = 2-methyladenosine(37) in tRNA + 5'-deoxyadenosine + L-methionine + 2 oxidized [2Fe-2S]-[ferredoxin] + S-adenosyl-L-homocysteine. In terms of biological role, specifically methylates position 2 of adenine 2503 in 23S rRNA and position 2 of adenine 37 in tRNAs. The polypeptide is Probable dual-specificity RNA methyltransferase RlmN (Porphyromonas gingivalis (strain ATCC BAA-308 / W83)).